We begin with the raw amino-acid sequence, 243 residues long: UPF0246 protein SEQ_2141 (243 aa).

Belongs to the UPF0246 family.

This Streptococcus equi subsp. equi (strain 4047) protein is UPF0246 protein SEQ_2141.